We begin with the raw amino-acid sequence, 380 residues long: Cytochrome b (380 aa).

The next 4 membrane-spanning stretches (helical) occupy residues 34–54, 78–99, 114–134, and 179–199; these read FGSL…LLAM, WLIR…FLHI, WNTG…GYVL, and FFAL…IHLT. Heme b is bound by residues His84 and His98. Residues His183 and His197 each contribute to the heme b site. A ubiquinone is bound at residue His202. Transmembrane regions (helical) follow at residues 227–247, 289–309, 321–341, and 348–368; these read LKDI…ALFS, LGGV…PFLH, LSQI…WIGS, and FIII…ILFP.

The protein belongs to the cytochrome b family. As to quaternary structure, the cytochrome bc1 complex contains 11 subunits: 3 respiratory subunits (MT-CYB, CYC1 and UQCRFS1), 2 core proteins (UQCRC1 and UQCRC2) and 6 low-molecular weight proteins (UQCRH/QCR6, UQCRB/QCR7, UQCRQ/QCR8, UQCR10/QCR9, UQCR11/QCR10 and a cleavage product of UQCRFS1). This cytochrome bc1 complex then forms a dimer. It depends on heme b as a cofactor.

It localises to the mitochondrion inner membrane. Component of the ubiquinol-cytochrome c reductase complex (complex III or cytochrome b-c1 complex) that is part of the mitochondrial respiratory chain. The b-c1 complex mediates electron transfer from ubiquinol to cytochrome c. Contributes to the generation of a proton gradient across the mitochondrial membrane that is then used for ATP synthesis. In Pavo muticus (Green peafowl), this protein is Cytochrome b (MT-CYB).